Reading from the N-terminus, the 107-residue chain is Phosphoribosyl-ATP pyrophosphatase (107 aa).

Belongs to the PRA-PH family.

The protein localises to the cytoplasm. It carries out the reaction 1-(5-phospho-beta-D-ribosyl)-ATP + H2O = 1-(5-phospho-beta-D-ribosyl)-5'-AMP + diphosphate + H(+). Its pathway is amino-acid biosynthesis; L-histidine biosynthesis; L-histidine from 5-phospho-alpha-D-ribose 1-diphosphate: step 2/9. The polypeptide is Phosphoribosyl-ATP pyrophosphatase (Bacillus thuringiensis (strain Al Hakam)).